The sequence spans 382 residues: Lipid-A-disaccharide synthase (382 aa).

The protein belongs to the LpxB family.

The enzyme catalyses 2-N,3-O-bis[(3R)-3-hydroxytetradecanoyl]-alpha-D-glucosaminyl 1-phosphate + UDP-2-N,3-O-bis[(3R)-3-hydroxytetradecanoyl]-alpha-D-glucosamine = lipid A disaccharide (E. coli) + UDP + H(+). It catalyses the reaction a lipid X + a UDP-2-N,3-O-bis[(3R)-3-hydroxyacyl]-alpha-D-glucosamine = a lipid A disaccharide + UDP + H(+). It functions in the pathway glycolipid biosynthesis; lipid IV(A) biosynthesis; lipid IV(A) from (3R)-3-hydroxytetradecanoyl-[acyl-carrier-protein] and UDP-N-acetyl-alpha-D-glucosamine: step 5/6. Functionally, condensation of UDP-2,3-diacylglucosamine and 2,3-diacylglucosamine-1-phosphate to form lipid A disaccharide, a precursor of lipid A, a phosphorylated glycolipid that anchors the lipopolysaccharide to the outer membrane of the cell. The polypeptide is Lipid-A-disaccharide synthase (Escherichia fergusonii (strain ATCC 35469 / DSM 13698 / CCUG 18766 / IAM 14443 / JCM 21226 / LMG 7866 / NBRC 102419 / NCTC 12128 / CDC 0568-73)).